The sequence spans 145 residues: uncharacterized protein (145 aa).

Belongs to the methyltransferase superfamily.

Probable methyltransferase. This is an uncharacterized protein from Schizosaccharomyces pombe (strain 972 / ATCC 24843) (Fission yeast).